The following is a 143-amino-acid chain: Transcriptional regulator MraZ (143 aa).

2 SpoVT-AbrB domains span residues Glu-5–Glu-47 and Ala-76–Glu-119.

The protein belongs to the MraZ family. As to quaternary structure, forms oligomers.

The protein localises to the cytoplasm. It is found in the nucleoid. The chain is Transcriptional regulator MraZ from Alkaliphilus oremlandii (strain OhILAs) (Clostridium oremlandii (strain OhILAs)).